We begin with the raw amino-acid sequence, 136 residues long: Nucleoside diphosphate kinase (136 aa).

Residues lysine 10, phenylalanine 58, arginine 86, threonine 92, arginine 104, and asparagine 114 each coordinate ATP. Histidine 117 (pros-phosphohistidine intermediate) is an active-site residue.

It belongs to the NDK family. In terms of assembly, homotetramer. Mg(2+) serves as cofactor.

The protein localises to the cytoplasm. The enzyme catalyses a 2'-deoxyribonucleoside 5'-diphosphate + ATP = a 2'-deoxyribonucleoside 5'-triphosphate + ADP. It catalyses the reaction a ribonucleoside 5'-diphosphate + ATP = a ribonucleoside 5'-triphosphate + ADP. In terms of biological role, major role in the synthesis of nucleoside triphosphates other than ATP. The ATP gamma phosphate is transferred to the NDP beta phosphate via a ping-pong mechanism, using a phosphorylated active-site intermediate. This chain is Nucleoside diphosphate kinase, found in Mycobacterium avium (strain 104).